Consider the following 310-residue polypeptide: ATP phosphoribosyltransferase (310 aa).

This sequence belongs to the ATP phosphoribosyltransferase family.

It is found in the cytoplasm. It carries out the reaction 1-(5-phospho-beta-D-ribosyl)-ATP + diphosphate = 5-phospho-alpha-D-ribose 1-diphosphate + ATP. It functions in the pathway amino-acid biosynthesis; L-histidine biosynthesis; L-histidine from 5-phospho-alpha-D-ribose 1-diphosphate: step 1/9. In terms of biological role, catalyzes the condensation of ATP and 5-phosphoribose 1-diphosphate to form N'-(5'-phosphoribosyl)-ATP (PR-ATP). Has a crucial role in the pathway because the rate of histidine biosynthesis seems to be controlled primarily by regulation of HisG enzymatic activity. This chain is ATP phosphoribosyltransferase (his1), found in Schizosaccharomyces pombe (strain 972 / ATCC 24843) (Fission yeast).